Consider the following 250-residue polypeptide: Peptidyl-tRNA hydrolase (250 aa).

TRNA is bound at residue Tyr-14. Catalysis depends on His-19, which acts as the Proton acceptor. Phe-64, Asn-66, and Asn-112 together coordinate tRNA. The tract at residues 192–250 (MGDGNQRPGGVKTDPAQLEKAPPKAQSHIRQARQNQKKPNIPESGPMAEMLKKLLGKKD) is disordered. Positions 219 to 229 (HIRQARQNQKK) are enriched in polar residues. Over residues 241–250 (MLKKLLGKKD) the composition is skewed to basic and acidic residues.

The protein belongs to the PTH family. Monomer.

Its subcellular location is the cytoplasm. The catalysed reaction is an N-acyl-L-alpha-aminoacyl-tRNA + H2O = an N-acyl-L-amino acid + a tRNA + H(+). Its function is as follows. Hydrolyzes ribosome-free peptidyl-tRNAs (with 1 or more amino acids incorporated), which drop off the ribosome during protein synthesis, or as a result of ribosome stalling. Catalyzes the release of premature peptidyl moieties from peptidyl-tRNA molecules trapped in stalled 50S ribosomal subunits, and thus maintains levels of free tRNAs and 50S ribosomes. The polypeptide is Peptidyl-tRNA hydrolase (Brucella abortus (strain 2308)).